The primary structure comprises 452 residues: uncharacterized protein (452 aa).

Residues 3-61 form the TRAM domain; it reads KVKIGEKYEVDITSMGHEGEGVGRIDGIAVFVKGALKGERVIVEIEEVHKNYLKGYTVK. [4Fe-4S] cluster is bound by residues Cys74, Cys80, Cys83, and Cys160. The S-adenosyl-L-methionine site is built by Gln284, Tyr313, Glu334, and Asp382. Cys409 serves as the catalytic Nucleophile.

The protein belongs to the class I-like SAM-binding methyltransferase superfamily. RNA M5U methyltransferase family.

This is an uncharacterized protein from Caldanaerobacter subterraneus subsp. tengcongensis (strain DSM 15242 / JCM 11007 / NBRC 100824 / MB4) (Thermoanaerobacter tengcongensis).